Consider the following 299-residue polypeptide: Leucine zipper transcription factor-like protein 1 (299 aa).

Residues 145 to 299 are interaction with BSS9; that stretch reads GTTELLNKEI…KRLAKYESED (155 aa). Residues 145–299 are a coiled coil; the sequence is GTTELLNKEI…KRLAKYESED (155 aa).

The protein belongs to the LZTFL1 family. In terms of assembly, self-associates. Interacts with BBS9; the interaction mediates the association of LZTL1 with the BBsome complex and regulates BBSome ciliary trafficking.

The protein localises to the cytoplasm. Regulates ciliary localization of the BBSome complex. Together with the BBSome complex, controls SMO ciliary trafficking and contributes to the sonic hedgehog (SHH) pathway regulation. May play a role in neurite outgrowth. May have tumor suppressor function. This chain is Leucine zipper transcription factor-like protein 1 (Lztfl1), found in Rattus norvegicus (Rat).